The sequence spans 145 residues: Large ribosomal subunit protein uL13 (145 aa).

This sequence belongs to the universal ribosomal protein uL13 family. In terms of assembly, part of the 50S ribosomal subunit.

In terms of biological role, this protein is one of the early assembly proteins of the 50S ribosomal subunit, although it is not seen to bind rRNA by itself. It is important during the early stages of 50S assembly. The chain is Large ribosomal subunit protein uL13 from Geobacillus thermodenitrificans (strain NG80-2).